A 241-amino-acid chain; its full sequence is Small ribosomal subunit protein bS6 (241 aa).

Over residues 97 to 108 the composition is skewed to basic residues; the sequence is KPKIRERNRKYT. The interval 97-241 is disordered; it reads KPKIRERNRK…YNNKKPQSSN (145 aa). The segment covering 109–118 has biased composition (basic and acidic residues); it reads PRRDRFEKPN. 2 stretches are compositionally biased toward low complexity: residues 130–151 and 161–182; these read QDQQ…QTSQ and DDFQ…NQSG. Residues 189–202 are compositionally biased toward polar residues; it reads RQNQENIHQNSKNH.

This sequence belongs to the bacterial ribosomal protein bS6 family.

Binds together with bS18 to 16S ribosomal RNA. This is Small ribosomal subunit protein bS6 from Mesomycoplasma hyopneumoniae (strain 232) (Mycoplasma hyopneumoniae).